A 175-amino-acid chain; its full sequence is Large ribosomal subunit protein uL6 (175 aa).

The protein belongs to the universal ribosomal protein uL6 family. Part of the 50S ribosomal subunit.

This protein binds to the 23S rRNA, and is important in its secondary structure. It is located near the subunit interface in the base of the L7/L12 stalk, and near the tRNA binding site of the peptidyltransferase center. In Xylella fastidiosa (strain M12), this protein is Large ribosomal subunit protein uL6.